The following is a 433-amino-acid chain: Nucleoprotein (433 aa).

The rdRP binding stretch occupies residues 1-50; sequence MSDLTDIQEEITRHEQQLVVARQKLKDAERAVEVDPDDVNKNTLQARQQT. 2 homomultimerization regions span residues 1–79 and 100–125; these read MSDL…TKPT and NVLD…IGVY. The interval 1–100 is chaperone activity; that stretch reads MSDLTDIQEE…KERSSLRYGN (100 aa). Positions 1 to 175 are viral panhandle binding; it reads MSDLTDIQEE…EDINGIRRPK (175 aa). Positions 4-71 form a coiled coil; the sequence is LTDIQEEITR…KRRMADAVSR (68 aa). The span at 67 to 78 shows a compositional bias: basic and acidic residues; it reads DAVSRKKMDTKP. The interval 67 to 92 is disordered; it reads DAVSRKKMDTKPTDPTGIEPDDHLKE. An interaction with glycoprotein N region spans residues 80–248; it reads DPTGIEPDDH…FMEKECPFIK (169 aa). The tract at residues 150–175 is interaction with host RPS19; it reads KENKGTRIRFKDDTSFEDINGIRRPK. The tract at residues 175-217 is viral RNA-binding; the sequence is KHLYVSMPTAQSTMKAEELTPGRFRTIVCGLFPTQIQVRNIMS. A YxxL motif is present at residues 178-181; that stretch reads YVSM. Residues 188-191 form an interaction with host UBE2I/UBC9 region; that stretch reads MKAE. The interval 377-425 is homomultimerization; sequence GIQLDQRIILLYMLEWGKEMVDHFHLGDDMDPELRGLAQSLIDQKVKEI. Residues 377–433 are interaction with host DAXX; that stretch reads GIQLDQRIILLYMLEWGKEMVDHFHLGDDMDPELRGLAQSLIDQKVKEISNQEPLKI.

This sequence belongs to the hantavirus nucleocapsid protein family. As to quaternary structure, homotrimer. Homomultimer. Homomultimerizes and binds to viral genomic RNA to form the nucleocapsid. Interacts with host MAP1LC3B; this interaction participates to the protection of Gn from virus-triggered autophagy. Interacts with host SNAP29; this interaction participates to the protection of glycoprotein N from virus-triggered autophagy. Interacts (via N-terminus) with host RPS19; this interaction probably mediates the loading of the 40S ribosomal subunit on viral capped mRNA during N-mediated translation initiation. Interacts with the viral RdRp. Interacts with host SUMO1 (via N-terminus). Interacts with host DAXX. Interacts with the viral glycoprotein N (via C-terminus). Interacts with the viral glycoprotein C (via C-terminus).

It localises to the virion. Its subcellular location is the host cytoplasm. The protein resides in the host perinuclear region. It is found in the host Golgi apparatus. The protein localises to the host cis-Golgi network. In terms of biological role, encapsidates the genome protecting it from nucleases. The encapsidated genomic RNA is termed the nucleocapsid (NC) and serves as template for transcription and replication. The nucleocapsid has a left-handed helical structure. As a trimer, specifically binds and acts as a chaperone to unwind the panhandle structure formed by the viral RNA (vRNA) termini. Involved in the transcription and replication initiation of vRNA by mediating primer annealing. Plays a role in cap snatching by sequestering capped RNAs in P bodies for use by the viral RdRp during transcription initiation. Substitutes for the cellular cap-binding complex (eIF4F) to preferentially facilitate the translation of capped mRNAs. Initiates the translation by specifically binding to the cap and 40S ribosomal subunit. Prevents the viral glycoprotein N (Gn) from autophagy-dependent breakdown maybe by blocking autophagosome formation. Inhibits host EIF2AK2/PKR dimerization to prevent PKR-induced translational shutdown in cells and thus the activation of the antiviral state. Also displays sequence-unspecific DNA endonuclease activity. The chain is Nucleoprotein (N) from Homo sapiens (Human).